Consider the following 137-residue polypeptide: Prostate and testis expressed protein 13 (137 aa).

Residues 1–20 form the signal peptide; the sequence is MFQKLLLSVFIILLMDVGER. Residues 28 to 114 enclose the UPAR/Ly6 domain; that stretch reads RHCNLCSHYD…CIDRNYCNDG (87 aa). 5 disulfide bridges follow: cysteine 30/cysteine 60, cysteine 33/cysteine 41, cysteine 48/cysteine 84, cysteine 87/cysteine 104, and cysteine 105/cysteine 111. Residue asparagine 57 is glycosylated (N-linked (GlcNAc...) asparagine).

The protein belongs to the PATE family. Strongly expressed in the epididymis, including the initial segment, caput, corpus and cauda regions. Weakly expressed in prostate.

Its subcellular location is the secreted. In Mus musculus (Mouse), this protein is Prostate and testis expressed protein 13.